The primary structure comprises 274 residues: 3-methyl-2-oxobutanoate hydroxymethyltransferase (274 aa).

Positions 49 and 88 each coordinate Mg(2+). Residues 49 to 50, Asp88, and Lys118 each bind 3-methyl-2-oxobutanoate; that span reads DS. Residue Glu120 participates in Mg(2+) binding. The Proton acceptor role is filled by Glu187.

Belongs to the PanB family. In terms of assembly, homodecamer; pentamer of dimers. Mg(2+) serves as cofactor.

It is found in the cytoplasm. The catalysed reaction is 3-methyl-2-oxobutanoate + (6R)-5,10-methylene-5,6,7,8-tetrahydrofolate + H2O = 2-dehydropantoate + (6S)-5,6,7,8-tetrahydrofolate. The protein operates within cofactor biosynthesis; (R)-pantothenate biosynthesis; (R)-pantoate from 3-methyl-2-oxobutanoate: step 1/2. Catalyzes the reversible reaction in which hydroxymethyl group from 5,10-methylenetetrahydrofolate is transferred onto alpha-ketoisovalerate to form ketopantoate. This chain is 3-methyl-2-oxobutanoate hydroxymethyltransferase, found in Rhodopseudomonas palustris (strain TIE-1).